The sequence spans 618 residues: Probable protein disulfide-isomerase A4 (618 aa).

Positions 1-21 (MMFDRRFFALVVLLCVSAVRS) are cleaved as a signal peptide. Thioredoxin domains follow at residues 22–139 (TEDA…SRVD), 138–254 (VDPN…DQSK), and 480–609 (SSGK…KHGV). 3 disulfides stabilise this stretch: Cys-65–Cys-68, Cys-176–Cys-179, and Cys-529–Cys-532. Residues 615-618 (KDEL) carry the Prevents secretion from ER motif.

The protein belongs to the protein disulfide isomerase family.

The protein localises to the endoplasmic reticulum lumen. It catalyses the reaction Catalyzes the rearrangement of -S-S- bonds in proteins.. This is Probable protein disulfide-isomerase A4 from Caenorhabditis elegans.